The chain runs to 604 residues: Aspartate--tRNA(Asp/Asn) ligase (604 aa).

Glu175 lines the L-aspartate pocket. The segment at Gln199–Lys202 is aspartate. L-aspartate contacts are provided by Arg221 and His456. Arg221–Glu223 is an ATP binding site. Glu496 lines the ATP pocket. Arg503 provides a ligand contact to L-aspartate. Gly548–Arg551 contacts ATP.

Belongs to the class-II aminoacyl-tRNA synthetase family. Type 1 subfamily. In terms of assembly, homodimer.

It localises to the cytoplasm. The enzyme catalyses tRNA(Asx) + L-aspartate + ATP = L-aspartyl-tRNA(Asx) + AMP + diphosphate. Aspartyl-tRNA synthetase with relaxed tRNA specificity since it is able to aspartylate not only its cognate tRNA(Asp) but also tRNA(Asn). Reaction proceeds in two steps: L-aspartate is first activated by ATP to form Asp-AMP and then transferred to the acceptor end of tRNA(Asp/Asn). The protein is Aspartate--tRNA(Asp/Asn) ligase of Methylorubrum populi (strain ATCC BAA-705 / NCIMB 13946 / BJ001) (Methylobacterium populi).